Consider the following 1380-residue polypeptide: DNA-directed RNA polymerase subunit beta (1380 aa).

This sequence belongs to the RNA polymerase beta chain family. In terms of assembly, the RNAP catalytic core consists of 2 alpha, 1 beta, 1 beta' and 1 omega subunit. When a sigma factor is associated with the core the holoenzyme is formed, which can initiate transcription.

The enzyme catalyses RNA(n) + a ribonucleoside 5'-triphosphate = RNA(n+1) + diphosphate. Functionally, DNA-dependent RNA polymerase catalyzes the transcription of DNA into RNA using the four ribonucleoside triphosphates as substrates. The polypeptide is DNA-directed RNA polymerase subunit beta (Ehrlichia ruminantium (strain Welgevonden)).